The primary structure comprises 300 residues: uncharacterized protein (300 aa).

Tyr53 functions as the Proton donor in the catalytic mechanism. 210–220 (SPLAGGKVFTE) contributes to the NADP(+) binding site.

The protein belongs to the aldo/keto reductase family. Aldo/keto reductase 2 subfamily.

This is an uncharacterized protein from Bacillus subtilis (strain 168).